The sequence spans 276 residues: Foldase protein PrsA (276 aa).

An N-terminal signal peptide occupies residues 1 to 18 (MRKWMIVAAVAAVFGLSA). Cys-19 is lipidated: N-palmitoyl cysteine. Cys-19 carries the S-diacylglycerol cysteine lipid modification. In terms of domain architecture, PpiC spans 133–223 (KPKIRASHIL…YGYHIIKVTD (91 aa)).

This sequence belongs to the PrsA family.

It is found in the cell membrane. It carries out the reaction [protein]-peptidylproline (omega=180) = [protein]-peptidylproline (omega=0). Plays a major role in protein secretion by helping the post-translocational extracellular folding of several secreted proteins. The polypeptide is Foldase protein PrsA (Geobacillus sp. (strain WCH70)).